Here is a 329-residue protein sequence, read N- to C-terminus: DNA-directed RNA polymerase subunit alpha (329 aa).

The interval 1–234 (MQGSVTEFLK…EQLDAFVELR (234 aa)) is alpha N-terminal domain (alpha-NTD). An alpha C-terminal domain (alpha-CTD) region spans residues 248 to 329 (FDPILLRPVD…WPPASLADDL (82 aa)).

The protein belongs to the RNA polymerase alpha chain family. In terms of assembly, homodimer. The RNAP catalytic core consists of 2 alpha, 1 beta, 1 beta' and 1 omega subunit. When a sigma factor is associated with the core the holoenzyme is formed, which can initiate transcription.

The enzyme catalyses RNA(n) + a ribonucleoside 5'-triphosphate = RNA(n+1) + diphosphate. DNA-dependent RNA polymerase catalyzes the transcription of DNA into RNA using the four ribonucleoside triphosphates as substrates. The sequence is that of DNA-directed RNA polymerase subunit alpha from Shewanella sp. (strain ANA-3).